A 381-amino-acid polypeptide reads, in one-letter code: Heterogeneous nuclear rnp K-like protein 2 (381 aa).

A disordered region spans residues 1-34; it reads MSQFFEAATPVAIPTNNTNGGSSDAGSAATGGAP. Low complexity predominate over residues 15–33; that stretch reads TNNTNGGSSDAGSAATGGA. KH domains lie at 43 to 107, 156 to 221, and 258 to 326; these read TINH…IGDI, IGYV…LIEI, and NTRI…ESML. The segment at 344-381 is disordered; sequence LEAAEGDATVVTERSDSASFLEEKEEPQKNHDNKEEQS. Residues Ser-358, Ser-360, and Ser-362 each carry the phosphoserine modification. Over residues 369 to 381 the composition is skewed to basic and acidic residues; sequence EPQKNHDNKEEQS.

It belongs to the HEK2 family. As to quaternary structure, binds RNA. Post-translationally, phosphorylated by the plasma membrane-Anchored casein kinase YCK1. Phosphorylation at its C-terminus reduces its RNA-binding capacity.

It localises to the cytoplasm. Its subcellular location is the P-body. The protein resides in the nucleus. It is found in the chromosome. The protein localises to the telomere. RNA-binding protein involved in the correct localization of transcripts in the cell. RNA localization is a widespread mechanism for achieving localized protein synthesis. Required for the asymmetric localization to the daughter cell nucleus of the ASH1 transcript, coding for a specific repressor of transcription. Overexpression inhibits translation of the ASH1 transcript. Involved in the stability of transcripts, like the MTL1 mRNA. Involved in structural and functional organization of telomeric chromatin and regulates silencing at the HMR locus. This is Heterogeneous nuclear rnp K-like protein 2 (HEK2) from Saccharomyces cerevisiae (strain JAY291) (Baker's yeast).